The sequence spans 389 residues: Glutamate 5-kinase (389 aa).

Residue K16 participates in ATP binding. Substrate is bound by residues S56, D143, and N155. Position 175 to 176 (175 to 176 (SD)) interacts with ATP. Residues 281 to 358 (AGELHVDDGA…AEIEAILGYA (78 aa)) form the PUA domain.

This sequence belongs to the glutamate 5-kinase family.

The protein localises to the cytoplasm. It catalyses the reaction L-glutamate + ATP = L-glutamyl 5-phosphate + ADP. It functions in the pathway amino-acid biosynthesis; L-proline biosynthesis; L-glutamate 5-semialdehyde from L-glutamate: step 1/2. Its function is as follows. Catalyzes the transfer of a phosphate group to glutamate to form L-glutamate 5-phosphate. The sequence is that of Glutamate 5-kinase from Rhizobium etli (strain CIAT 652).